The sequence spans 137 residues: Structural protein A137R (137 aa).

This sequence belongs to the asfivirus A137R family. As to quaternary structure, interacts with host TBK1.

Its subcellular location is the virion. The protein localises to the host cytoplasm. Plays a role in the inhibition of the host innate immune response. Mechanistically, promotes the autophagy-mediated lysosomal degradation of host TBK1 and affects IRF3 nuclear translocation to block type I IFN production. This is Structural protein A137R from Ornithodoros (relapsing fever ticks).